Consider the following 381-residue polypeptide: 5-amino-6-(D-ribitylamino)uracil--L-tyrosine 4-hydroxyphenyl transferase (381 aa).

Residues 59–306 (VTYVVNRNIN…TAVARIFLGN (248 aa)) form the Radical SAM core domain. The [4Fe-4S] cluster site is built by Cys-73, Cys-77, and Cys-80.

Belongs to the radical SAM superfamily. CofH family. As to quaternary structure, consists of two subunits, CofG and CofH. It depends on [4Fe-4S] cluster as a cofactor.

The enzyme catalyses 5-amino-6-(D-ribitylamino)uracil + L-tyrosine + S-adenosyl-L-methionine = 5-amino-5-(4-hydroxybenzyl)-6-(D-ribitylimino)-5,6-dihydrouracil + 2-iminoacetate + 5'-deoxyadenosine + L-methionine + H(+). It participates in cofactor biosynthesis; coenzyme F0 biosynthesis. In terms of biological role, catalyzes the radical-mediated synthesis of 5-amino-5-(4-hydroxybenzyl)-6-(D-ribitylimino)-5,6-dihydrouracil from 5-amino-6-(D-ribitylamino)uracil and L-tyrosine. This chain is 5-amino-6-(D-ribitylamino)uracil--L-tyrosine 4-hydroxyphenyl transferase, found in Cyanothece sp. (strain PCC 7425 / ATCC 29141).